The sequence spans 187 residues: ATP synthase subunit delta (187 aa).

It belongs to the ATPase delta chain family. As to quaternary structure, F-type ATPases have 2 components, F(1) - the catalytic core - and F(0) - the membrane proton channel. F(1) has five subunits: alpha(3), beta(3), gamma(1), delta(1), epsilon(1). F(0) has three main subunits: a(1), b(2) and c(10-14). The alpha and beta chains form an alternating ring which encloses part of the gamma chain. F(1) is attached to F(0) by a central stalk formed by the gamma and epsilon chains, while a peripheral stalk is formed by the delta and b chains.

The protein localises to the cell membrane. In terms of biological role, f(1)F(0) ATP synthase produces ATP from ADP in the presence of a proton or sodium gradient. F-type ATPases consist of two structural domains, F(1) containing the extramembraneous catalytic core and F(0) containing the membrane proton channel, linked together by a central stalk and a peripheral stalk. During catalysis, ATP synthesis in the catalytic domain of F(1) is coupled via a rotary mechanism of the central stalk subunits to proton translocation. Its function is as follows. This protein is part of the stalk that links CF(0) to CF(1). It either transmits conformational changes from CF(0) to CF(1) or is implicated in proton conduction. In Mesomycoplasma hyopneumoniae (strain 7448) (Mycoplasma hyopneumoniae), this protein is ATP synthase subunit delta.